Reading from the N-terminus, the 453-residue chain is MKEKQFWNRILEFAQERLTRSMYDFYAIQAELIKVEENVATIFLPRSEMEMVWEKQLKDIIVVAGFEIYDAEITPHYIFTKPQDTTSSQVEEATNLTLYDYSPKLVSIPYSDTGLKEKYTFDNFIQGDGNVWAVSAALAVSEDLALTYNPLFIYGGPGLGKTHLLNAIGNEILKNIPNARVKYIPAESFINDFLDHLRLGEMEKFKKTYRSLDLLLIDDIQSLSGKKVATQEEFFNTFNALHDKQKQIVLTSDRSPKHLEGLEERLVTRFSWGLTQTITPPDFETRIAILQSKTEHLGYNFQSDTLEYLAGQFDSNVRDLEGAINDITLIARVKKIKDITIDIAAEAIRARKQDVSQMLVIPIDKIQTEVGNFYGVSIKEMKGSRRLQNIVLARQVAMYLSRELTDNSLPKIGKEFGGKDHTTVIHAHVKIKSLIDQDDNLRLEIESIKKKIK.

Positions methionine 1–threonine 74 are domain I, interacts with DnaA modulators. Positions threonine 74–threonine 113 are domain II. Residues glycine 114 to alanine 331 are domain III, AAA+ region. 4 residues coordinate ATP: glycine 158, glycine 160, lysine 161, and threonine 162. Residues arginine 332–lysine 453 are domain IV, binds dsDNA.

Belongs to the DnaA family. As to quaternary structure, oligomerizes as a right-handed, spiral filament on DNA at oriC.

The protein resides in the cytoplasm. Functionally, plays an essential role in the initiation and regulation of chromosomal replication. ATP-DnaA binds to the origin of replication (oriC) to initiate formation of the DNA replication initiation complex once per cell cycle. Binds the DnaA box (a 9 base pair repeat at the origin) and separates the double-stranded (ds)DNA. Forms a right-handed helical filament on oriC DNA; dsDNA binds to the exterior of the filament while single-stranded (ss)DNA is stabiized in the filament's interior. The ATP-DnaA-oriC complex binds and stabilizes one strand of the AT-rich DNA unwinding element (DUE), permitting loading of DNA polymerase. After initiation quickly degrades to an ADP-DnaA complex that is not apt for DNA replication. Binds acidic phospholipids. The polypeptide is Chromosomal replication initiator protein DnaA (Streptococcus pneumoniae (strain Taiwan19F-14)).